A 78-amino-acid chain; its full sequence is Large ribosomal subunit protein bL28 (78 aa).

The interval 1-31 (MAAHCQVTGAEPGFGHSISHSHRRNKRRFDP) is disordered.

The protein belongs to the bacterial ribosomal protein bL28 family.

This Pseudarthrobacter chlorophenolicus (strain ATCC 700700 / DSM 12829 / CIP 107037 / JCM 12360 / KCTC 9906 / NCIMB 13794 / A6) (Arthrobacter chlorophenolicus) protein is Large ribosomal subunit protein bL28.